The sequence spans 151 residues: MRVSGRPMLLALLLLLSTVGDRGRAQSRGPADRQTLLRLLVELVQELKKFHIGDSKRLQLLGESDFALGRREATDYGADQEEQRVEIVPRDLRMKDKFLKHLTGPLYFSPKCSKHFHRLYHNTRDCTIPAYYKRCARLLTRLAVSPMCMER.

A signal peptide spans 1–25 (MRVSGRPMLLALLLLLSTVGDRGRA). 2 cysteine pairs are disulfide-bonded: C112–C148 and C126–C135.

The protein belongs to the ALKAL family. In terms of assembly, homodimer.

It is found in the secreted. The protein localises to the cell membrane. Functionally, cytokine that acts as a physiological ligand for receptor tyrosine kinases LTK and ALK, leading to their activation. Cytokine-binding is sufficient to activate LTK. In contrast, ALKAL2-driven activation of ALK is coupled with heparin-binding to ALK. Stimulation of ALK signaling is involved in neural development and regulation of energy expenditure. This Mus musculus (Mouse) protein is ALK and LTK ligand 2.